The chain runs to 256 residues: ATP synthase peripheral stalk subunit b, mitochondrial (256 aa).

The transit peptide at 1-42 (MLSRVVLSAAATAAPSLKNAAFLGPGVLQATRTFHTGQPHLV) directs the protein to the mitochondrion. Position 131 is an N6-succinyllysine (Lys131). 6 positions are modified to N6-acetyllysine: Lys139, Lys154, Lys162, Lys221, Lys233, and Lys244.

It belongs to the eukaryotic ATPase B chain family. Component of the ATP synthase complex composed at least of ATP5F1A/subunit alpha, ATP5F1B/subunit beta, ATP5MC1/subunit c (homooctomer), MT-ATP6/subunit a, MT-ATP8/subunit 8, ATP5ME/subunit e, ATP5MF/subunit f, ATP5MG/subunit g, ATP5MK/subunit k, ATP5MJ/subunit j, ATP5F1C/subunit gamma, ATP5F1D/subunit delta, ATP5F1E/subunit epsilon, ATP5PF/subunit F6, ATP5PB/subunit b, ATP5PD/subunit d, ATP5PO/subunit OSCP. ATP synthase complex consists of a soluble F(1) head domain (subunits alpha(3) and beta(3)) - the catalytic core - and a membrane F(0) domain - the membrane proton channel (subunits c, a, 8, e, f, g, k and j). These two domains are linked by a central stalk (subunits gamma, delta, and epsilon) rotating inside the F1 region and a stationary peripheral stalk (subunits F6, b, d, and OSCP).

The protein resides in the mitochondrion. It localises to the mitochondrion inner membrane. In terms of biological role, subunit b, of the mitochondrial membrane ATP synthase complex (F(1)F(0) ATP synthase or Complex V) that produces ATP from ADP in the presence of a proton gradient across the membrane which is generated by electron transport complexes of the respiratory chain. ATP synthase complex consist of a soluble F(1) head domain - the catalytic core - and a membrane F(1) domain - the membrane proton channel. These two domains are linked by a central stalk rotating inside the F(1) region and a stationary peripheral stalk. During catalysis, ATP synthesis in the catalytic domain of F(1) is coupled via a rotary mechanism of the central stalk subunits to proton translocation. In vivo, can only synthesize ATP although its ATP hydrolase activity can be activated artificially in vitro. Part of the complex F(0) domain. Part of the complex F(0) domain and the peripheric stalk, which acts as a stator to hold the catalytic alpha(3)beta(3) subcomplex and subunit a/ATP6 static relative to the rotary elements. The sequence is that of ATP synthase peripheral stalk subunit b, mitochondrial from Homo sapiens (Human).